We begin with the raw amino-acid sequence, 349 residues long: Small ribosomal subunit protein uS2 (349 aa).

The disordered stretch occupies residues 302 to 334 (QNNYDPSKRGYNPKYVNHKSTFNKFNNKKPVDS).

The protein belongs to the universal ribosomal protein uS2 family.

The polypeptide is Small ribosomal subunit protein uS2 (Ureaplasma parvum serovar 3 (strain ATCC 27815 / 27 / NCTC 11736)).